Reading from the N-terminus, the 185-residue chain is uncharacterized protein (185 aa).

It belongs to the PIGL family.

This is an uncharacterized protein from Escherichia coli (strain K12).